The primary structure comprises 276 residues: Sulfur carrier protein FdhD (276 aa).

The Cysteine persulfide intermediate role is filled by Cys120.

The protein belongs to the FdhD family.

It is found in the cytoplasm. In terms of biological role, required for formate dehydrogenase (FDH) activity. Acts as a sulfur carrier protein that transfers sulfur from IscS to the molybdenum cofactor prior to its insertion into FDH. In Bordetella bronchiseptica (strain ATCC BAA-588 / NCTC 13252 / RB50) (Alcaligenes bronchisepticus), this protein is Sulfur carrier protein FdhD.